Reading from the N-terminus, the 784-residue chain is 5-methyltetrahydropteroyltriglutamate--homocysteine methyltransferase (784 aa).

5-methyltetrahydropteroyltri-L-glutamate is bound by residues 16–19 and lysine 112; that span reads RELK. L-homocysteine is bound by residues 460–462 and glutamate 513; that span reads IGS. Residues 460 to 462 and glutamate 513 contribute to the L-methionine site; that span reads IGS. Tryptophan 590 contacts 5-methyltetrahydropteroyltri-L-glutamate. An L-homocysteine-binding site is contributed by aspartate 628. Aspartate 628 provides a ligand contact to L-methionine. 5-methyltetrahydropteroyltri-L-glutamate is bound at residue glutamate 634. Residues histidine 670, cysteine 672, and glutamate 694 each coordinate Zn(2+). Catalysis depends on histidine 723, which acts as the Proton donor. Position 755 (cysteine 755) interacts with Zn(2+).

The protein belongs to the vitamin-B12 independent methionine synthase family. Zn(2+) serves as cofactor.

The enzyme catalyses 5-methyltetrahydropteroyltri-L-glutamate + L-homocysteine = tetrahydropteroyltri-L-glutamate + L-methionine. It functions in the pathway amino-acid biosynthesis; L-methionine biosynthesis via de novo pathway; L-methionine from L-homocysteine (MetE route): step 1/1. Catalyzes the transfer of a methyl group from 5-methyltetrahydrofolate to homocysteine resulting in methionine formation. In Acidithiobacillus ferrooxidans (strain ATCC 23270 / DSM 14882 / CIP 104768 / NCIMB 8455) (Ferrobacillus ferrooxidans (strain ATCC 23270)), this protein is 5-methyltetrahydropteroyltriglutamate--homocysteine methyltransferase.